Consider the following 278-residue polypeptide: Lectin 6 (278 aa).

The first 23 residues, 1–23 (MTLSSALIKIFITFLFLQNHVNS), serve as a signal peptide directing secretion. N-linked (GlcNAc...) asparagine glycans are attached at residues N116, N139, and N271.

This sequence belongs to the leguminous lectin family.

Its function is as follows. May be involved in arbuscular mycorrhizal (AM) symbiosis with AM fungi. In Medicago truncatula (Barrel medic), this protein is Lectin 6.